A 377-amino-acid polypeptide reads, in one-letter code: N-acetyldiaminopimelate deacetylase (377 aa).

Residue Asp70 is part of the active site. Glu129 (proton acceptor) is an active-site residue.

It belongs to the peptidase M20A family. N-acetyldiaminopimelate deacetylase subfamily.

The catalysed reaction is N-acetyl-(2S,6S)-2,6-diaminopimelate + H2O = (2S,6S)-2,6-diaminopimelate + acetate. The protein operates within amino-acid biosynthesis; L-lysine biosynthesis via DAP pathway; LL-2,6-diaminopimelate from (S)-tetrahydrodipicolinate (acetylase route): step 3/3. Its function is as follows. Catalyzes the conversion of N-acetyl-diaminopimelate to diaminopimelate and acetate. The sequence is that of N-acetyldiaminopimelate deacetylase from Streptococcus thermophilus (strain CNRZ 1066).